A 542-amino-acid chain; its full sequence is MAKQIVYGDEARAKMKAGIEKVAKAVSVTLGPKGRSVVLEKKFGSPLIIDDGVTIAKDIELEDKFENMGAQLIREVASKTNDIAGDGTTTATVLTHAILTEGIKNITAGANPTLVKKGIEMAVETVKEELKKMQRPVETKEEKAQIATISANDRMVGELIAEAMEKVGHEGVITVEEGKTATTELQVVEGMQFDRGYISPYFVTDSERMECVLEDCQIILADKKVSSMNELLPLLEGIVKNGRNFLIIAEDVDGEALATLVVNRLRGTLKGCAVKAPGFGDRRKEMLEDIAILTGGQVIAEERGMKLETATLDMLGSAKRVVIDKENATIVSGEGDKKKIEARAEQIRKQIENSTSDYDKEKLQERLAKLSGGVAVISVGAATETEMKAKKAKVEDAKNATKAGVEEGLIPGGGVALTRCEGAVGKLKADNEDVQTGINIVKKALTAPLYQIAFNAGLDGSVVVENVRNAKGNQGFDADTGEYVDMIKAGVVDAVKVVRIGLENAASIAATVLLTEALVADIPEEKGAAPMGHPGMGGMGMM.

Residues 29–32 (TLGP), 86–90 (DGTTT), Gly-413, and Asp-493 each bind ATP.

This sequence belongs to the chaperonin (HSP60) family. Forms a cylinder of 14 subunits composed of two heptameric rings stacked back-to-back. Interacts with the co-chaperonin GroES.

It localises to the cytoplasm. It catalyses the reaction ATP + H2O + a folded polypeptide = ADP + phosphate + an unfolded polypeptide.. Its function is as follows. Together with its co-chaperonin GroES, plays an essential role in assisting protein folding. The GroEL-GroES system forms a nano-cage that allows encapsulation of the non-native substrate proteins and provides a physical environment optimized to promote and accelerate protein folding. This is Chaperonin GroEL from Elusimicrobium minutum (strain Pei191).